The chain runs to 130 residues: Protein lgg-2 (130 aa).

Residue Gly-130 is the site of Phosphatidylethanolamine amidated glycine attachment.

The protein belongs to the ATG8 family. May interact with vps-39. Interacts with lgg-3; the interaction is direct. Interacts with atg-16.1 (via WD domain) and atg-16.2 (via WD 5-6 repeats); the interactions are direct. Interacts with sepa-1 (via the LIR motifs); the interaction is direct. Interacts with sqst-1 (via the LIR motifs); the interaction is direct. Interacts with epg-2 (via the LIR motifs); the interaction is weak. Interacts with atg-7; the interaction is direct. Interacts with atg-3. The interaction with atg-7 and atg-3 may be required for the lipidation of lgg-2. This protein is subject to lipidation. Lipidation is regulated by lgg-1.

The protein localises to the cytoplasmic vesicle. It localises to the autophagosome. It is found in the cytoplasm. The protein resides in the cell membrane. Its function is as follows. Ubiquitin-like modifier involved in the formation of autophagosomal vacuoles (autophagosomes). When lipidated mediates tethering between adjacent membranes and stimulates membrane fusion. Less effective at promoting membrane fusion than lgg-1. Acts upstream of the autophagy protein epg-5 in the aggrephagy pathway, which is the macroautophagic degradation of ubiquitinated protein aggregates, and preferentially interacts with autophagy proteins and substrates containing LIR motifs to mediate autophagosome formation and protein aggregate degradation. In particular binds to components of an atg-5-lgg-3-atg-16 complex to regulate autophagosome formation and cargo sequestration. Required for the degradation of specific sqst-1-containing aggregates during embryogenesis and the early stages of larval development. Involved in allophagy, which is an autophagic process in which paternal mitochondria and organelles are degraded during fertilization, and moreover is required for the degradation of lgg-1-positive allophagic autophagosomes in embryos. Involved in xenophagy, the autophagy-mediated degradation of pathogens and pathogen products, such as toxins. Also plays a role in membrane-pore repair. Through HOPS complex subunit vps-39, tethers lysosomes with autophagosomes to form autolysosomes. Plays a role in the distribution and clearance of germ cell specific P-granules from somatic cells to ensure exclusive localization of the P-granules in germ cells. Essential for dauer development and life-span extension. In Caenorhabditis elegans, this protein is Protein lgg-2.